The chain runs to 802 residues: MSFNHQEIEKKWQGYWEENKTFRTPDETEKPKFYALDMFPYPSGAGLHVGHPEGYTATDILSRMKRMQGYNVLHPMGWDAFGLPAEQYALDTGNSPAEFTEHNINTFRNQIKSLGFSYDWDREVNTTDPNYYKWTQWIFLKLFEKGLAYVDEVPVNWCPALGTVLANEEIIDGKSERGGHPVERRPMRQWMLKITAYGDRLLEDLDELDWPESLKDMQRNWIGRSEGAEVHFNIDGTDEKFTVFTTRPDTLFGATYCVLAPEHALVAEITTAEQKEAVEAYINAVKMKSDLERTELAKEKTGVFTGAYAVNPVNGEKLPIWIADYVLATYGTGAVMAVPAHDERDYEFASVFNLPMKEVVKGGDITKEVYTGDGAHVNSAFLDGLNKEEAIAKMIEWLEATSAGNQKVTYRLRDWLFSRQRYWGEPIPVIHWEDGTMTAVKEEELPLVLPKTENIRPSGTGESPLANIDEWVNVVDPETGKKGRRETNTMPQWAGSCWYYLRYIDPNNSEALVDPEKVKQWLPVDIYIGGAEHAVLHLLYARFWHKVLYDIGVVPTKEPFQQLFNQGMILGENNEKMSKSKGNVVNPDDIVASHGADTLRLYEMFMGPLDASIAWSENGLDGARRFLDRVWRLFVQDNGELSEKITDAPNKELEKAYHQTVKKVTEDYAELRFNTAISQMMVFINDAYKAETLPREYVEGFVKMIAPVAPHIGEELWSKLGYNETITYASWPTFDESKLVEDEVEIVVQVMGKVRAKLTMSKDASKEEMEQLALEAIQDQIEGKTVRKVVVVPGKLVNVVAN.

The short motif at 40–51 (PYPSGAGLHVGH) is the 'HIGH' region element. The 'KMSKS' region motif lies at 576–580 (KMSKS). K579 contributes to the ATP binding site.

The protein belongs to the class-I aminoacyl-tRNA synthetase family.

The protein resides in the cytoplasm. The enzyme catalyses tRNA(Leu) + L-leucine + ATP = L-leucyl-tRNA(Leu) + AMP + diphosphate. The protein is Leucine--tRNA ligase of Bacillus cereus (strain B4264).